We begin with the raw amino-acid sequence, 258 residues long: Imidazole glycerol phosphate synthase subunit HisF (258 aa).

Catalysis depends on residues Asp11 and Asp130.

The protein belongs to the HisA/HisF family. As to quaternary structure, heterodimer of HisH and HisF.

It localises to the cytoplasm. It carries out the reaction 5-[(5-phospho-1-deoxy-D-ribulos-1-ylimino)methylamino]-1-(5-phospho-beta-D-ribosyl)imidazole-4-carboxamide + L-glutamine = D-erythro-1-(imidazol-4-yl)glycerol 3-phosphate + 5-amino-1-(5-phospho-beta-D-ribosyl)imidazole-4-carboxamide + L-glutamate + H(+). The protein operates within amino-acid biosynthesis; L-histidine biosynthesis; L-histidine from 5-phospho-alpha-D-ribose 1-diphosphate: step 5/9. Its function is as follows. IGPS catalyzes the conversion of PRFAR and glutamine to IGP, AICAR and glutamate. The HisF subunit catalyzes the cyclization activity that produces IGP and AICAR from PRFAR using the ammonia provided by the HisH subunit. The sequence is that of Imidazole glycerol phosphate synthase subunit HisF from Xanthomonas axonopodis pv. citri (strain 306).